Here is a 205-residue protein sequence, read N- to C-terminus: Melanocortin-2 receptor accessory protein 2 (205 aa).

Residue Asn-9 is glycosylated (N-linked (GlcNAc...) asparagine). A helical membrane pass occupies residues 45 to 65 (IVIGFWVGLAVFVIFMFFVLT). Residue Ser-89 is modified to Phosphoserine.

This sequence belongs to the MRAP family. As to quaternary structure, homodimer and heterodimer. Forms antiparallel homodimers and heterodimers with MRAP. Interacts with MC1R, MC2R, MC3R, MC4R and MC5R. Expressed in the adrenal gland and brain. Not expressed in other tissues.

The protein resides in the cell membrane. Its subcellular location is the endoplasmic reticulum membrane. Functionally, modulator of melanocortin receptor 4 (MC4R), a receptor involved in energy homeostasis. Plays a central role in the control of energy homeostasis and body weight regulation by increasing ligand-sensitivity of MC4R and MC4R-mediated generation of cAMP. May also act as a negative regulator of MC2R: competes with MRAP for binding to MC2R and impairs the binding of corticotropin (ACTH) to MC2R. May also regulate activity of other melanocortin receptors (MC1R, MC3R and MC5R); however, additional evidence is required in vivo. This chain is Melanocortin-2 receptor accessory protein 2 (MRAP2), found in Homo sapiens (Human).